The chain runs to 95 residues: Integration host factor subunit beta (95 aa).

The protein belongs to the bacterial histone-like protein family. Heterodimer of an alpha and a beta chain.

Functionally, this protein is one of the two subunits of integration host factor, a specific DNA-binding protein that functions in genetic recombination as well as in transcriptional and translational control. The sequence is that of Integration host factor subunit beta from Jannaschia sp. (strain CCS1).